Reading from the N-terminus, the 479-residue chain is Calcium uniporter protein, mitochondrial (479 aa).

The transit peptide at Met1–Arg54 directs the protein to the mitochondrion. Residues Gln55–Arg323 are Mitochondrial matrix-facing. 2 disordered regions span residues Glu56–Leu125 and Glu206–Pro238. A coiled-coil region spans residues Ala59–Arg79. Over residues Glu60–Arg75 the composition is skewed to basic and acidic residues. Positions Asn83 to Leu93 are enriched in polar residues. Composition is skewed to basic and acidic residues over residues Glu94–Lys122 and Glu206–Asn224. Residues Leu324 to Phe344 form a helical membrane-spanning segment. Residues His345 to Glu354 are Mitochondrial intermembrane-facing. The Selectivity filter motif lies at Trp350–Tyr358. Glu354 contacts Ca(2+). The helical transmembrane segment at Pro355–Ile375 threads the bilayer. Topologically, residues Ser376–Gln479 are mitochondrial matrix. Over residues Lys445–Gly462 the composition is skewed to basic and acidic residues. The disordered stretch occupies residues Lys445–Gln479.

This sequence belongs to the MCU (TC 1.A.77) family. As to quaternary structure, homotetramer, assembles in a dimer or dimers configuration with two interfaces.

The protein resides in the mitochondrion inner membrane. It catalyses the reaction Ca(2+)(in) = Ca(2+)(out). Functionally, highly selective calcium channel localized to the inner mitochondrial membrane, which mediates calcium uptake into the mitochondrial matrix. Mitochondrial calcium homeostasis plays key roles in cellular physiology and regulates ATP production, cytoplasmic calcium signals and activation of cell death pathways. Sufficient to operate as a pore-forming channel without the need of calcium-sensor or auxiliary subunit. This Gibberella zeae (strain ATCC MYA-4620 / CBS 123657 / FGSC 9075 / NRRL 31084 / PH-1) (Wheat head blight fungus) protein is Calcium uniporter protein, mitochondrial.